The chain runs to 462 residues: Ubiquitin carboxyl-terminal hydrolase calypso (462 aa).

In terms of domain architecture, UCH catalytic spans 29–260 (GWLELESDPG…IRFNLMAVVP (232 aa)). C115 functions as the Nucleophile in the catalytic mechanism. Catalysis depends on H197, which acts as the Proton donor. The ULD domain occupies 357 to 385 (NYDKFICTFLTMLAHQGVLGELVSQHLLP). The tract at residues 387–462 (KKISGQSAAN…KGRNKCRKRK (76 aa)) is positively charged C-terminal tail required for binding nucleosomes. The segment at 394 to 462 (AANRLNKQNS…KGRNKCRKRK (69 aa)) is disordered. Residues 399 to 447 (NKQNSAAASTANSSAGATAGGAKSQQQQQQQQQPQQPQTPKNGKSPGKT) are compositionally biased toward low complexity. The span at 448 to 462 (PGRRRKGRNKCRKRK) shows a compositional bias: basic residues.

It belongs to the peptidase C12 family. BAP1 subfamily. In terms of assembly, catalytic component of the polycomb repressive deubiquitinase (PR-DUB) complex, at least composed of caly/calypso, Asx and sba (MBD5/6 homolog). The PR-DUB complex associates with nucleosomes to mediate deubiquitination of histone H2AK118ub1 substrates; the association requires the positively charged C-terminal tail of caly, probably due to direct binding of DNA. Interacts (via ULD domain) with Asx (via DEUBAD domain); the interaction produces a stable heterodimer with a composite binding site for ubiquitin. Homodimerizes (via coiled-coil hinge-region between the UCH and ULD domains) to mediate assembly of 2 copies of the caly-Asx heterodimer into a bisymmetric tetramer; dimerization enhances PR-DUB association with nucleosomes.

It is found in the nucleus. The catalysed reaction is Thiol-dependent hydrolysis of ester, thioester, amide, peptide and isopeptide bonds formed by the C-terminal Gly of ubiquitin (a 76-residue protein attached to proteins as an intracellular targeting signal).. Functionally, catalytic component of the polycomb repressive deubiquitinase (PR-DUB) complex, a complex that specifically mediates deubiquitination of histone H2A monoubiquitinated at 'Lys-119' (H2AK118ub1). Mediates bisymmetric organization of the PR-DUB complex and is involved in association with nucleosomes to mediate deubiquitination. Does not deubiquitinate monoubiquitinated histone H2B. Required to maintain the transcriptionally repressive state of homeotic genes throughout development. The PR-DUB complex has weak or no activity toward 'Lys-48'- and 'Lys-63'-linked polyubiquitin chains. Polycomb group (PcG) protein. This is Ubiquitin carboxyl-terminal hydrolase calypso from Drosophila virilis (Fruit fly).